The primary structure comprises 251 residues: Small ribosomal subunit protein uS2 (251 aa).

The protein belongs to the universal ribosomal protein uS2 family.

This is Small ribosomal subunit protein uS2 from Nitrosomonas europaea (strain ATCC 19718 / CIP 103999 / KCTC 2705 / NBRC 14298).